Here is a 26-residue protein sequence, read N- to C-terminus: PRKCH upstream open reading frame 2 (26 aa).

In terms of assembly, interacts with protein kinase C eta as well as other protein kinases including PRKCD, PRKCQ and PRKCE but not with PRKCG or PRKCZ; the interactions lead to inhibition of kinase activity.

Product of an upstream open reading frame (ORF) of PRKCH which regulates translation of the downstream protein kinase C eta (PKC-eta) ORF. Functions as a repressive element that maintains low basal levels of PKC-eta in growing cells but enhances its expression during stress conditions induced by amino acid starvation in a EIF2AK4/GCN2-dependent manner. In addition to its role in regulating PKC-eta translation, also inhibits the kinase activity of PKC-eta as well as other protein kinases including PRKCD, PRKCQ and PRKCE but not PRKCA, PRKCG or PRKCZ. The chain is PRKCH upstream open reading frame 2 from Homo sapiens (Human).